Consider the following 681-residue polypeptide: Chaperone protein htpG (681 aa).

The a; substrate-binding stretch occupies residues 1-326; sequence MQKGNIGVTT…SPDIPLNVSR (326 aa). Positions 327-545 are b; that stretch reads SYLQSDSNVK…YMRRMKEMAN (219 aa). The c stretch occupies residues 546 to 681; sequence IQAGMSFYGE…NFVKRSIELI (136 aa).

This sequence belongs to the heat shock protein 90 family. As to quaternary structure, homodimer.

The protein localises to the cytoplasm. Molecular chaperone. Has ATPase activity. The polypeptide is Chaperone protein htpG (Bacteroides fragilis (strain YCH46)).